A 149-amino-acid polypeptide reads, in one-letter code: Probable flagellum biosynthesis repressor protein FlbT (149 aa).

It belongs to the FlbT family.

Its function is as follows. Has a post-transcriptional repressor function in flagellum biogenesis. Associates with the 5'-UTR of fljK mRNA and promotes its degradation. The sequence is that of Probable flagellum biosynthesis repressor protein FlbT from Agrobacterium fabrum (strain C58 / ATCC 33970) (Agrobacterium tumefaciens (strain C58)).